The following is a 402-amino-acid chain: 2,3-bisphosphoglycerate-independent phosphoglycerate mutase 2 (402 aa).

The protein belongs to the BPG-independent phosphoglycerate mutase family. A-PGAM subfamily.

The catalysed reaction is (2R)-2-phosphoglycerate = (2R)-3-phosphoglycerate. It participates in carbohydrate degradation; glycolysis; pyruvate from D-glyceraldehyde 3-phosphate: step 3/5. Its function is as follows. Catalyzes the interconversion of 2-phosphoglycerate and 3-phosphoglycerate. The protein is 2,3-bisphosphoglycerate-independent phosphoglycerate mutase 2 (apgM2) of Methanothermobacter thermautotrophicus (strain ATCC 29096 / DSM 1053 / JCM 10044 / NBRC 100330 / Delta H) (Methanobacterium thermoautotrophicum).